The sequence spans 695 residues: Cysteine-rich receptor-like protein kinase 6 (695 aa).

An N-terminal signal peptide occupies residues 1 to 31 (MRRHRPYLDGVAAAAATFLLAVLLHAPLAAG). Residues 32-294 (EDEPPPWVLC…ATSGEKTKNR (263 aa)) lie on the Extracellular side of the membrane. Gnk2-homologous domains lie at 38–142 (WVLC…NRDF) and 151–261 (TTYT…VFPF). Asparagine 49, asparagine 53, asparagine 70, and asparagine 101 each carry an N-linked (GlcNAc...) asparagine glycan. Intrachain disulfides connect cysteine 96–cysteine 105 and cysteine 108–cysteine 133. An N-linked (GlcNAc...) asparagine glycan is attached at asparagine 178. 2 cysteine pairs are disulfide-bonded: cysteine 215-cysteine 224 and cysteine 227-cysteine 252. Residues 295–315 (IGTVLAIVMPAIAAILLMVVA) form a helical membrane-spanning segment. Over 316 to 695 (CFCCWKRIKK…DLSITELVPR (380 aa)) the chain is Cytoplasmic. Residues 363-634 (FADTKMIGQG…PTISSVNIML (272 aa)) form the Protein kinase domain. ATP-binding positions include 369 to 377 (IGQGGFGMV) and lysine 391. The active-site Proton acceptor is the aspartate 488. Residues 658-682 (DSSNPYSERYPRPRHSGYSDNSTVV) form a disordered region.

Belongs to the protein kinase superfamily. Ser/Thr protein kinase family. CRK subfamily.

The protein localises to the membrane. Its function is as follows. Involved in disease resistance. Required for NPR1/NH1-mediated immunity to the bacterial blight pathogen Xanthomomas oryzae pv. oryzae (Xoo). Required for the benzothiadiazole (BTH)-induced immune response. Possesses kinase activity in vitro. The polypeptide is Cysteine-rich receptor-like protein kinase 6 (Oryza sativa subsp. japonica (Rice)).